The sequence spans 609 residues: Sporulation-specific protein 21 (609 aa).

Disordered regions lie at residues 1–50, 68–96, and 124–165; these read MDNI…LENS, PASK…DGNS, and KLDS…SIKG. The segment covering 10–31 has biased composition (polar residues); that stretch reads MEGTSTMTVTSRSSEDSSCISN. Positions 32–43 are enriched in basic and acidic residues; it reads HEQDTDTHKDGD. The span at 68–81 shows a compositional bias: low complexity; sequence PASKSSRSIGSMKS. Composition is skewed to polar residues over residues 82-96 and 127-136; these read NQSL…DGNS and STGSQRSKNN. The segment covering 143–159 has biased composition (low complexity); that stretch reads SSTTSQTTCSSSSSSSS. Coiled coils occupy residues 283–342, 357–393, and 424–483; these read RTKI…DNES, RETL…ATNF, and ENLT…LLIE. The interval 586-609 is disordered; sequence DQKSNQNSSTPYKQSQRQVPHSIK. The segment covering 587-609 has biased composition (polar residues); it reads QKSNQNSSTPYKQSQRQVPHSIK.

Belongs to the MPC70 family. As to quaternary structure, interacts directly with MPC54, NUD1 and SPC42. Interacts with ADY3. Interacts with ADY4. Probable component of a SPB complex composed of ADY3, SSP1, DON1, MPC54, SPO21/MPC70, NUD1 and CNM67.

It is found in the prospore membrane. Its subcellular location is the cytoplasm. The protein localises to the cytoskeleton. The protein resides in the spindle pole. Involved in the pathway that organizes the shaping and sizing of the prospore membrane (PSM) during sporulation. May provide a meiosis-specific scaffold for the assembly of other proteins on spindle pole bodies (SPBs), and may be a limiting component for SPB formation. The sequence is that of Sporulation-specific protein 21 (SPO21) from Saccharomyces cerevisiae (strain ATCC 204508 / S288c) (Baker's yeast).